The chain runs to 242 residues: MMTMRRHLLLVSNSTLHGGGYLEHCQEHILKFLGAQVKRVLFIPYALHDRDAYAKTARQKFEALGYGLDSVHESPDPVDAVKKAEAIFIGGGNTFRLLKALYDNDLIAAIRKRVLEDGVPYIGSSAGTNVATISINTTNDMPIVYPPSLKALELVPFNINPHYLDPDGNSKHMGETREQRITQYHEEHDTPPVLGLREGCFLLVEGDKATLLGITRARLFLRGKNPTEHEPGHDFSFLLGHS.

Residues Ser-125, Asp-140, and His-162 each act as charge relay system in the active site.

It belongs to the peptidase S51 family.

Its subcellular location is the cytoplasm. The catalysed reaction is Dipeptidase E catalyzes the hydrolysis of dipeptides Asp-|-Xaa. It does not act on peptides with N-terminal Glu, Asn or Gln, nor does it cleave isoaspartyl peptides.. Hydrolyzes dipeptides containing N-terminal aspartate residues. In Xenopus laevis (African clawed frog), this protein is Alpha-aspartyl dipeptidase (aad-a).